Reading from the N-terminus, the 435-residue chain is Methylenetetrahydrofolate--tRNA-(uracil-5-)-methyltransferase TrmFO (435 aa).

FAD is bound at residue 7–12 (GAGLAG).

The protein belongs to the MnmG family. TrmFO subfamily. FAD serves as cofactor.

Its subcellular location is the cytoplasm. It carries out the reaction uridine(54) in tRNA + (6R)-5,10-methylene-5,6,7,8-tetrahydrofolate + NADH + H(+) = 5-methyluridine(54) in tRNA + (6S)-5,6,7,8-tetrahydrofolate + NAD(+). The enzyme catalyses uridine(54) in tRNA + (6R)-5,10-methylene-5,6,7,8-tetrahydrofolate + NADPH + H(+) = 5-methyluridine(54) in tRNA + (6S)-5,6,7,8-tetrahydrofolate + NADP(+). Catalyzes the folate-dependent formation of 5-methyl-uridine at position 54 (M-5-U54) in all tRNAs. This chain is Methylenetetrahydrofolate--tRNA-(uracil-5-)-methyltransferase TrmFO, found in Thermotoga sp. (strain RQ2).